We begin with the raw amino-acid sequence, 137 residues long: Hydrogenase-4 component J (137 aa).

This sequence to E.coli HycH.

Functionally, possible component of hydrogenase 4. This Escherichia coli (strain K12) protein is Hydrogenase-4 component J.